The chain runs to 252 residues: Probable transcriptional regulatory protein THA_1246 (252 aa).

It belongs to the TACO1 family.

It is found in the cytoplasm. This Thermosipho africanus (strain TCF52B) protein is Probable transcriptional regulatory protein THA_1246.